Reading from the N-terminus, the 112-residue chain is M-myrmeciitoxin-Mp1 (112 aa).

An N-terminal signal peptide occupies residues 1–26 (MKLSCLLLTLTIIFVLTIVHAPNVEA). The propeptide occupies 27 to 56 (KDLADPESEAVGFADAFGEADAVGEADPNA). Residues 57 to 78 (GLGSVFGRLARILGRVIPKVAK) form a critical for cytotoxic activity region. The igE-binding determinant stretch occupies residues 93–106 (KEAIPMAVEMAKSQ).

Belongs to the formicidae venom precursor-01 superfamily. Ant pilosulin family. As to expression, expressed by the venom gland.

The protein resides in the secreted. Its function is as follows. Has strong cytotoxic and hemolytic activities. Is more potent against mononuclear leukocytes than against granulocytes. The synthesized peptide 57-76 shows a potent and broad spectrum antimicrobial activity against both Gram-positive and Gram-negative bacteria, and also against the fungus C.albicans. Adopts an alpha-helical structure. The chain is M-myrmeciitoxin-Mp1 from Myrmecia pilosula (Jack jumper ant).